The chain runs to 337 residues: Protein XAP5 CIRCADIAN TIMEKEEPER (337 aa).

S2 bears the N-acetylserine mark. Coiled coils occupy residues 13 to 41 and 72 to 121; these read QDAV…KSAS and TREE…GSSR. Positions 23–37 are enriched in basic and acidic residues; the sequence is KQREAERKKIQELKS. Residues 23–47 form a disordered region; that stretch reads KQREAERKKIQELKSKSASGNDQSG. A compositionally biased stretch (polar residues) spans 38 to 47; that stretch reads KSASGNDQSG. The disordered stretch occupies residues 125-174; sequence AEDFENGSDEDDGENKSSGTGNLRCGKLGKDPSVETNFLPDSEREAEEQA. Positions 126–137 are enriched in acidic residues; the sequence is EDFENGSDEDDG. Residue S132 is modified to Phosphoserine. The segment covering 165-174 has biased composition (basic and acidic residues); the sequence is DSEREAEEQA.

Belongs to the FAM50 family. In terms of tissue distribution, expressed in leaves stems, flowers, roots, trichomes and hypocotyls.

The protein resides in the nucleus. Its function is as follows. Involved in light regulation of the circadian clock and photomorphogenesis. May play a global role in coordinating growth in response to the light environment. Acts as a light quality sensor directing both negative and positive transcriptional regulation. Inhibits growth in red light but promote growth in blue light. Inhibits clock gene expression in diurnal cycles. Plays no role in the control of flowering time. The protein is Protein XAP5 CIRCADIAN TIMEKEEPER (XCT) of Arabidopsis thaliana (Mouse-ear cress).